A 332-amino-acid polypeptide reads, in one-letter code: Small ribosomal subunit protein uS2 (332 aa).

It belongs to the universal ribosomal protein uS2 family.

The polypeptide is Small ribosomal subunit protein uS2 (Nitrobacter hamburgensis (strain DSM 10229 / NCIMB 13809 / X14)).